Consider the following 509-residue polypeptide: Bifunctional purine biosynthesis protein PurH (509 aa).

The MGS-like domain occupies 1-144 (MKRALISVSD…KNYAAVTVVV (144 aa)).

The protein belongs to the PurH family.

It catalyses the reaction (6R)-10-formyltetrahydrofolate + 5-amino-1-(5-phospho-beta-D-ribosyl)imidazole-4-carboxamide = 5-formamido-1-(5-phospho-D-ribosyl)imidazole-4-carboxamide + (6S)-5,6,7,8-tetrahydrofolate. The catalysed reaction is IMP + H2O = 5-formamido-1-(5-phospho-D-ribosyl)imidazole-4-carboxamide. The protein operates within purine metabolism; IMP biosynthesis via de novo pathway; 5-formamido-1-(5-phospho-D-ribosyl)imidazole-4-carboxamide from 5-amino-1-(5-phospho-D-ribosyl)imidazole-4-carboxamide (10-formyl THF route): step 1/1. It participates in purine metabolism; IMP biosynthesis via de novo pathway; IMP from 5-formamido-1-(5-phospho-D-ribosyl)imidazole-4-carboxamide: step 1/1. In Listeria monocytogenes serotype 4a (strain HCC23), this protein is Bifunctional purine biosynthesis protein PurH.